Consider the following 508-residue polypeptide: Photosystem II CP47 reaction center protein (508 aa).

The next 6 helical transmembrane spans lie at 21–36 (SVHIMHTALVSGWAGS), 101–115 (IVFSGLCFLAAIWHW), 140–156 (GIHLFLAGVACFGFGAF), 203–218 (IAAGTLGILAGLFHLS), 237–252 (VLSSSIAAVFFAAFVV), and 457–472 (TFALLFFFGHIWHGAR).

Belongs to the PsbB/PsbC family. PsbB subfamily. In terms of assembly, PSII is composed of 1 copy each of membrane proteins PsbA, PsbB, PsbC, PsbD, PsbE, PsbF, PsbH, PsbI, PsbJ, PsbK, PsbL, PsbM, PsbT, PsbX, PsbY, PsbZ, Psb30/Ycf12, at least 3 peripheral proteins of the oxygen-evolving complex and a large number of cofactors. It forms dimeric complexes. Binds multiple chlorophylls. PSII binds additional chlorophylls, carotenoids and specific lipids. serves as cofactor.

Its subcellular location is the plastid. It is found in the chloroplast thylakoid membrane. Functionally, one of the components of the core complex of photosystem II (PSII). It binds chlorophyll and helps catalyze the primary light-induced photochemical processes of PSII. PSII is a light-driven water:plastoquinone oxidoreductase, using light energy to abstract electrons from H(2)O, generating O(2) and a proton gradient subsequently used for ATP formation. The polypeptide is Photosystem II CP47 reaction center protein (Zea mays (Maize)).